The chain runs to 975 residues: Glycine dehydrogenase (decarboxylating) (975 aa).

Lysine 723 carries the post-translational modification N6-(pyridoxal phosphate)lysine.

Belongs to the GcvP family. In terms of assembly, the glycine cleavage system is composed of four proteins: P, T, L and H. Requires pyridoxal 5'-phosphate as cofactor.

It catalyses the reaction N(6)-[(R)-lipoyl]-L-lysyl-[glycine-cleavage complex H protein] + glycine + H(+) = N(6)-[(R)-S(8)-aminomethyldihydrolipoyl]-L-lysyl-[glycine-cleavage complex H protein] + CO2. Its function is as follows. The glycine cleavage system catalyzes the degradation of glycine. The P protein binds the alpha-amino group of glycine through its pyridoxal phosphate cofactor; CO(2) is released and the remaining methylamine moiety is then transferred to the lipoamide cofactor of the H protein. In Burkholderia thailandensis (strain ATCC 700388 / DSM 13276 / CCUG 48851 / CIP 106301 / E264), this protein is Glycine dehydrogenase (decarboxylating).